We begin with the raw amino-acid sequence, 435 residues long: Homoserine dehydrogenase (435 aa).

NADPH is bound by residues Thr13, Val14, Arg43, and Lys105. Val14 contributes to the NAD(+) binding site. NADP(+)-binding residues include Val14, Arg43, and Lys105. Na(+) contacts are provided by Glu129, Val132, Gly134, and Ile136. Lys204 acts as the Proton donor in catalysis. Disordered regions lie at residues 255 to 274 and 377 to 402; these read ARGV…TPDR and RCDD…PDHV. 2 stretches are compositionally biased toward basic and acidic residues: residues 262–274 and 377–391; these read RAPD…TPDR and RCDD…AERR.

The protein belongs to the homoserine dehydrogenase family. It depends on a metal cation as a cofactor.

It catalyses the reaction L-homoserine + NADP(+) = L-aspartate 4-semialdehyde + NADPH + H(+). The enzyme catalyses L-homoserine + NAD(+) = L-aspartate 4-semialdehyde + NADH + H(+). Its pathway is amino-acid biosynthesis; L-methionine biosynthesis via de novo pathway; L-homoserine from L-aspartate: step 3/3. It participates in amino-acid biosynthesis; L-threonine biosynthesis; L-threonine from L-aspartate: step 3/5. Its function is as follows. Catalyzes the conversion of L-aspartate-beta-semialdehyde (L-Asa) to L-homoserine (L-Hse), the third step in the biosynthesis of threonine and methionine from aspartate. The chain is Homoserine dehydrogenase (hom) from Methylobacillus glycogenes.